The chain runs to 284 residues: 4-hydroxybenzoate octaprenyltransferase (284 aa).

A run of 7 helical transmembrane segments spans residues 33 to 53 (VIAA…LGVF), 93 to 113 (IGLF…MNPL), 136 to 156 (HIPQ…AWAA), 159 to 179 (GELP…TIAY), 209 to 229 (LIIG…GQFY), 235 to 252 (YYWT…QQHL), and 264 to 284 (AFLN…VAFW).

The protein belongs to the UbiA prenyltransferase family. Mg(2+) serves as cofactor.

The protein resides in the cell inner membrane. It catalyses the reaction all-trans-octaprenyl diphosphate + 4-hydroxybenzoate = 4-hydroxy-3-(all-trans-octaprenyl)benzoate + diphosphate. It participates in cofactor biosynthesis; ubiquinone biosynthesis. In terms of biological role, catalyzes the prenylation of para-hydroxybenzoate (PHB) with an all-trans polyprenyl group. Mediates the second step in the final reaction sequence of ubiquinone-8 (UQ-8) biosynthesis, which is the condensation of the polyisoprenoid side chain with PHB, generating the first membrane-bound Q intermediate 3-octaprenyl-4-hydroxybenzoate. This chain is 4-hydroxybenzoate octaprenyltransferase, found in Vibrio parahaemolyticus serotype O3:K6 (strain RIMD 2210633).